The chain runs to 471 residues: MSTKTYDAGVKDYALTYWTPDYVPLDSDLLACFKVTPQAKVSREEAAAAVAAESSTGTWTTVWSDLLTDLDYYKGRAYRIEDVPGDKESFYAFIAYPLDLFEEGSIVNVLTSLVGNVFGFKAVRALRLEDIRFPLHYVKTCGGPPNGIQVERDRMDKYGRPFLGATVKPKLGLSAKNYGRAVYEMLRGGLDFTKDDENVNSQPFMRWQNRFEFVSEAVRKAQEETGERKGHYLNVTAPTCEEMFKRAEFAKECGAPIIMHDFLTGGFTANTSLANWCRDNGMLLHIHRAMHAVIDRNPKHGIHFRVLAKCLRLSGGDHLHTGTVVGKLEGDRQSTLGFVDQLRESFIPEDRSRGLFFDQDWGGMPGVMAVASGGIHVWHIPALVTIFGDDSVLQFGGGTQGHPWGNAAGAAANRVATEACVKARNEGVEIEKHAREVLSDAARHSPELAVAMETWKEIKFEFDVVDKLDAA.

The substrate site is built by N116 and T166. The active-site Proton acceptor is K168. K170 is a substrate binding site. Residues K194, D196, and E197 each contribute to the Mg(2+) site. At K194 the chain carries N6-carboxylysine. Catalysis depends on H287, which acts as the Proton acceptor. Residues R288, H320, and S372 each contribute to the substrate site.

The protein belongs to the RuBisCO large chain family. Type I subfamily. As to quaternary structure, heterohexadecamer of 8 large chains and 8 small chains; disulfide-linked. The disulfide link is formed within the large subunit homodimers. Requires Mg(2+) as cofactor. Post-translationally, the disulfide bond which can form in the large chain dimeric partners within the hexadecamer appears to be associated with oxidative stress and protein turnover.

It catalyses the reaction 2 (2R)-3-phosphoglycerate + 2 H(+) = D-ribulose 1,5-bisphosphate + CO2 + H2O. The catalysed reaction is D-ribulose 1,5-bisphosphate + O2 = 2-phosphoglycolate + (2R)-3-phosphoglycerate + 2 H(+). RuBisCO catalyzes two reactions: the carboxylation of D-ribulose 1,5-bisphosphate, the primary event in carbon dioxide fixation, as well as the oxidative fragmentation of the pentose substrate. Both reactions occur simultaneously and in competition at the same active site. In Allochromatium vinosum (strain ATCC 17899 / DSM 180 / NBRC 103801 / NCIMB 10441 / D) (Chromatium vinosum), this protein is Ribulose bisphosphate carboxylase large chain 2.